Here is a 152-residue protein sequence, read N- to C-terminus: UPF0178 protein NIS_0137 (152 aa).

This sequence belongs to the UPF0178 family.

The sequence is that of UPF0178 protein NIS_0137 from Nitratiruptor sp. (strain SB155-2).